The primary structure comprises 1406 residues: DNA-directed RNA polymerase subunit beta' (1406 aa).

Zn(2+)-binding residues include Cys-70, Cys-72, Cys-85, and Cys-88. Positions 460, 462, and 464 each coordinate Mg(2+). Residues Cys-814, Cys-888, Cys-895, and Cys-898 each contribute to the Zn(2+) site.

The protein belongs to the RNA polymerase beta' chain family. In terms of assembly, the RNAP catalytic core consists of 2 alpha, 1 beta, 1 beta' and 1 omega subunit. When a sigma factor is associated with the core the holoenzyme is formed, which can initiate transcription. Requires Mg(2+) as cofactor. The cofactor is Zn(2+).

It carries out the reaction RNA(n) + a ribonucleoside 5'-triphosphate = RNA(n+1) + diphosphate. Functionally, DNA-dependent RNA polymerase catalyzes the transcription of DNA into RNA using the four ribonucleoside triphosphates as substrates. The chain is DNA-directed RNA polymerase subunit beta' from Photorhabdus laumondii subsp. laumondii (strain DSM 15139 / CIP 105565 / TT01) (Photorhabdus luminescens subsp. laumondii).